The following is a 684-amino-acid chain: DNA-directed RNA polymerase subunit beta' (684 aa).

Residues cysteine 69, cysteine 71, cysteine 87, and cysteine 90 each coordinate Zn(2+). Mg(2+) contacts are provided by aspartate 489, aspartate 491, and aspartate 493.

The protein belongs to the RNA polymerase beta' chain family. RpoC1 subfamily. In plastids the minimal PEP RNA polymerase catalytic core is composed of four subunits: alpha, beta, beta', and beta''. When a (nuclear-encoded) sigma factor is associated with the core the holoenzyme is formed, which can initiate transcription. The cofactor is Mg(2+). Requires Zn(2+) as cofactor.

Its subcellular location is the plastid. It is found in the chloroplast. The enzyme catalyses RNA(n) + a ribonucleoside 5'-triphosphate = RNA(n+1) + diphosphate. Its function is as follows. DNA-dependent RNA polymerase catalyzes the transcription of DNA into RNA using the four ribonucleoside triphosphates as substrates. This Marchantia polymorpha (Common liverwort) protein is DNA-directed RNA polymerase subunit beta'.